Here is a 1477-residue protein sequence, read N- to C-terminus: MKYLRGLLLPALLALAPSIAAKKDEPLIETTAFKNDLINLMYFDDSGVALVQEIENGNVWRSHDAGKGWSQIKDVSKVLRITKSPYDNKAAIVLGEKKHWITYDRGENWDSFETEFPPSPVAPVGWHASDNKKILVNEIEDCFLAPCLGRTYYTTDGFKSKPKVLVEDRRMCQWAKGSERFLEGEDKHDSRILCITRGKYSDRSKDFRLLISDNFFKDSEEPKMSSGRTVQGMTNMAAVKGYIVVASKPDHSNELSLYTTQDTETWHHAQFGDHKIEEDAYTILESTNYSIQVDVMTSKYVDMGNMYTSNSRGTYFTKNVEHTNRNQDGFVDFEKIANIQGVVLVNTVDNWKEYEKSGQNKKLKSRISFDDGRSFEKLTVKGKDDELHLHSVTNLHNSGRVFSSPAPGIVMGVGNTGEHLGKYTDGDLYVSDDAGLTWEMALSEAHKYEFGDQGSVLVAVFDEGDTDEIRYSFKHGRKDSWKKIKLDYKIRARELTTLPDATSLKFMMYASRKKEGGGREHVIIHLDFADMLPKCEDKDFDDKWSVRQETDGKPSCVMGHKQLFRRRKWDAECFIGDVFNDPVPTFEPCDCDEIRDYECDFGFDPSGEGKDKKCVPSDSRKLPEGACEGDAKTFKDKSGWRKIPGNQCKGETDREKEVERPCGDAEKQPPKSNKITSELTKFKGGNFQEYYYLERNAQADDDKPNDRDKDETVVMLTDERTAWITHDHGKKWKKAVDDEIVRIYPHQYENNYVYFLTATKKVYYSEDRGLHDSIHSFQAPTMPNTERLEIMRFHPNQKGWLIWMGGKNCEKVGDKDCHTVSYISQKNGQEESWEPMVPYVKKCVFIWREAGRKVKEEQVFCEQYTNEEMGAPLQLISSDDWFKKKEVKFKSVVEFATMAEFIVVATKADDGTLHLDATLDGSTFAEAKFPPKFFDVHQTAYTVLDSSTHAVFLHVTVNPQRDQEYGSIIKSNSNGTSYVMSLSGVNRNTEGYVDFEKMQGLEGVAVANIVANVDEVNNGTKKRKQSRITHNDGAAWEPLQAPEKDSEDQPYKCDVSDKEKCSLHIHGYTERADPREMYSSPTAVGMMLAVGNVGSELTTFGEASTFMTIDAGITWKEIKKGTYAWEFGDQGAIIAIVRRGEDTDHIYYSLDYGEKWNLYKFSEHKIRVDAITTVPSDTSLNFLLWGKDSKELVAVNIDFSGLPDFKRKCEIDEDNPTAGDFDLWSPQHPLQDGDQDCLFGHVAQYHRKKRGAQCKTQQRIDHMHNIARNCTCTRRDYECAYNYERKPGGECEKIPGLELADPKEVCSKGAKEWWDPSPYRKIPLSTCQGKEMDQIGEVHACPGFEEEFEKKHGLSGFGIFLAVVLPFLAAGGIGYYVWRNWDGKFGRIRLGENGGSFDSDAAWVKWPVAAVSGLVAVVTAIPLVMGSLWNFLASRMGGGYGGRTYTSRSSFARGRGDYAVVDPDEGELLGEESDEEV.

Positions 1–21 are cleaved as a signal peptide; that stretch reads MKYLRGLLLPALLALAPSIAA. The Lumenal segment spans residues 22–1356; the sequence is KKDEPLIETT…EFEKKHGLSG (1335 aa). Residues 100-110 form a BNR 1 repeat; the sequence is WITYDRGENWD. N288 carries N-linked (GlcNAc...) asparagine glycosylation. BNR repeat units follow at residues 367 to 377 and 429 to 439; these read ISFDDGRSFEK and YVSDDAGLTWE. The tract at residues 645–672 is disordered; it reads GNQCKGETDREKEVERPCGDAEKQPPKS. Positions 650–669 are enriched in basic and acidic residues; it reads GETDREKEVERPCGDAEKQP. Residues 723–734 form a BNR 4 repeat; sequence WITHDHGKKWKK. N974 and N1018 each carry an N-linked (GlcNAc...) asparagine glycan. The tract at residues 1019 to 1050 is disordered; that stretch reads GTKKRKQSRITHNDGAAWEPLQAPEKDSEDQP. 2 BNR repeats span residues 1106–1116 and 1147–1157; these read FMTIDAGITWK and YYSLDYGEKWN. N1269 carries an N-linked (GlcNAc...) asparagine glycan. The chain crosses the membrane as a helical span at residues 1357-1377; it reads FGIFLAVVLPFLAAGGIGYYV. Residues 1378 to 1405 lie on the Cytoplasmic side of the membrane; the sequence is WRNWDGKFGRIRLGENGGSFDSDAAWVK. A helical membrane pass occupies residues 1406–1426; the sequence is WPVAAVSGLVAVVTAIPLVMG. Topologically, residues 1427-1477 are lumenal; it reads SLWNFLASRMGGGYGGRTYTSRSSFARGRGDYAVVDPDEGELLGEESDEEV.

Belongs to the VPS10-related sortilin family.

It is found in the golgi apparatus. The protein resides in the trans-Golgi network membrane. Its subcellular location is the prevacuolar compartment membrane. In terms of biological role, functions as a sorting receptor in the Golgi compartment required for the intracellular sorting and delivery of soluble vacuolar proteins, like carboxypeptidase Y (CPY) and proteinase A. Executes multiple rounds of sorting by cycling between the late Golgi and a prevacuolar endosome-like compartment. The chain is Vacuolar protein sorting/targeting protein 10 (VPS10) from Leptosphaeria maculans (strain JN3 / isolate v23.1.3 / race Av1-4-5-6-7-8) (Blackleg fungus).